We begin with the raw amino-acid sequence, 187 residues long: NADH-quinone oxidoreductase subunit B (187 aa).

Residues Cys66, Cys67, Cys131, and Cys161 each coordinate [4Fe-4S] cluster.

This sequence belongs to the complex I 20 kDa subunit family. As to quaternary structure, NDH-1 is composed of 14 different subunits. Subunits NuoB, C, D, E, F, and G constitute the peripheral sector of the complex. Requires [4Fe-4S] cluster as cofactor.

Its subcellular location is the cell inner membrane. It catalyses the reaction a quinone + NADH + 5 H(+)(in) = a quinol + NAD(+) + 4 H(+)(out). Functionally, NDH-1 shuttles electrons from NADH, via FMN and iron-sulfur (Fe-S) centers, to quinones in the respiratory chain. Couples the redox reaction to proton translocation (for every two electrons transferred, four hydrogen ions are translocated across the cytoplasmic membrane), and thus conserves the redox energy in a proton gradient. The protein is NADH-quinone oxidoreductase subunit B of Rhizorhabdus wittichii (strain DSM 6014 / CCUG 31198 / JCM 15750 / NBRC 105917 / EY 4224 / RW1) (Sphingomonas wittichii).